The primary structure comprises 479 residues: MDFSRNLYDIGEQLDSEDLASLKFLSLDYIPQRKQEPIKDALMLFQRLQEKRMLEESNLSFLKELLFRINRLDLLITYLNTRKEEMERELQTPGRAQISAYRVMLYQISEEVSRSELRSFKFLLQEEISKCKLDDDMNLLDIFIEMEKRVILGEGKLDILKRVCAQINKSLLKIINDYEEFSKERSSSLEGSPDEFSNGEELCGVMTISDSPREQDSESQTLDKVYQMKSKPRGYCLIINNHNFAKAREKVPKLHSIRDRNGTHLDAGALTTTFEELHFEIKPHDDCTVEQIYEILKIYQLMDHSNMDCFICCILSHGDKGIIYGTDGQEAPIYELTSQFTGLKCPSLAGKPKVFFIQACQGDNYQKGIPVETDSEEQPYLEMDLSSPQTRYIPDEADFLLGMATVNNCVSYRNPAEGTWYIQSLCQSLRERCPRGDDILTILTEVNYEVSNKDDKKNMGKQMPQPTFTLRKKLVFPSD.

Residues 1 to 216 (MDFSRNLYDI…TISDSPREQD (216 aa)) constitute a propeptide that is removed on maturation. DED domains are found at residues 2–80 (DFSR…TYLN) and 100–177 (AYRV…IIND). Residues serine 188 and serine 211 each carry the phosphoserine modification. Lysine 224 carries the N6-acetyllysine modification. Histidine 317 is a catalytic residue. The residue at position 334 (tyrosine 334) is a Phosphotyrosine. Residue cysteine 360 is part of the active site. A propeptide spanning residues 375-384 (SEEQPYLEMD) is cleaved from the precursor. At tyrosine 380 the chain carries Phosphotyrosine; by SRC. Residue serine 387 is modified to Phosphoserine; by CDK1. Arginine 413 carries the post-translational modification (Microbial infection) ADP-riboxanated arginine.

Belongs to the peptidase C14A family. Heterotetramer that consists of two anti-parallel arranged heterodimers, each one formed by a 18 kDa (p18) and a 10 kDa (p10) subunit. Component of the death-induced signaling complex (DISC) composed of cell surface receptor FAS/CD95 or TNFRSF1A, adapter protein FADD and the CASP8 protease; recruitment of CASP8 to the complex is required for processing of CASP8 into the p18 and p10 subunits. Component of the AIM2 PANoptosome complex, a multiprotein complex that drives inflammatory cell death (PANoptosis). Interacts with CFLAR and PEA15. Interacts with TNFAIP8L2. Interacts with CASP8AP2. Interacts with RFFL and RNF34; negatively regulate CASP8 through proteasomal degradation. Interacts with NOL3; decreases CASP8 activity in a mitochondria localization- and phosphorylation-dependent manner and this interaction is dissociated by calcium. Interacts with UBR2ca. Interacts with RIPK1. Interacts with stimulated TNFRSF10B; this interaction is followed by CASP8 proteolytic cleavage and activation. Interacts (phosphorylated on Tyr-380) with PIK3R1. In terms of assembly, interacts at the endoplasmic reticulum with a complex containing BCAP31, BAP29, BCL2 and/or BCL2L1. As to quaternary structure, (Microbial infection) Interacts with human cytomegalovirus/HHV-5 protein vICA/UL36; this interaction inhibits CASP8 activation. (Microbial infection) Interacts with NleF from pathogenic E.coli. In terms of assembly, (Microbial infection) Interacts with molluscum contagiosum virus protein MC160. As to quaternary structure, (Microbial infection) Interacts (via RIP homotypic interaction motif) with herpes simplex virus 1/HHV-1 protein RIR1/ICP6 (via RIP homotypic interaction motif); this interaction prevents necroptosis activation. (Microbial infection) Interacts (via RIP homotypic interaction motif) with herpes simplex virus 2/HHV-2 protein RIR1/ICP10 (via RIP homotypic interaction motif); this interaction prevents necroptosis activation. Post-translationally, generation of the p10 and p18 subunits requires association with the death-inducing signaling complex (DISC), whereas additional processing is likely due to the autocatalytic activity of the activated protease. GZMB and CASP10 can be involved in these processing events. Phosphorylation on Ser-387 during mitosis by CDK1 inhibits activation by proteolysis and prevents apoptosis. Phosphorylation on Tyr-380 by SRC is mediated by interaction with the SRC SH2 domain and does not affect dimerization or recruitment to the death-inducing signaling complex (DISC) but negatively regulates DISC-mediated processing and activation of CASP8, down-regulating its proapoptotic function. Phosphorylation on Tyr-380 also enhances localization to lamellipodia in migrating cells. In terms of processing, (Microbial infection) ADP-riboxanation by C.violaceum CopC blocks CASP8 processing, preventing CASP8 activation and ability to mediate extrinsic apoptosis. Post-translationally, (Microbial infection) Proteolytically cleaved by the cowpox virus CRMA death inhibitory protein. Isoform 1, isoform 5 and isoform 7 are expressed in a wide variety of tissues. Highest expression in peripheral blood leukocytes, spleen, thymus and liver. Barely detectable in brain, testis and skeletal muscle.

It is found in the cytoplasm. Its subcellular location is the nucleus. The protein localises to the cell projection. It localises to the lamellipodium. It carries out the reaction Strict requirement for Asp at position P1 and has a preferred cleavage sequence of (Leu/Asp/Val)-Glu-Thr-Asp-|-(Gly/Ser/Ala).. CASP8 activity is restricted by RIPK1. Inhibited by the effector protein NleF that is produced by pathogenic E.coli; this inhibits apoptosis. Thiol protease that plays a key role in programmed cell death by acting as a molecular switch for apoptosis, necroptosis and pyroptosis, and is required to prevent tissue damage during embryonic development and adulthood. Initiator protease that induces extrinsic apoptosis by mediating cleavage and activation of effector caspases responsible for FAS/CD95-mediated and TNFRSF1A-induced cell death. Cleaves and activates effector caspases CASP3, CASP4, CASP6, CASP7, CASP9 and CASP10. Binding to the adapter molecule FADD recruits it to either receptor FAS/TNFRSF6 or TNFRSF1A. The resulting aggregate called the death-inducing signaling complex (DISC) performs CASP8 proteolytic activation. The active dimeric enzyme is then liberated from the DISC and free to activate downstream apoptotic proteases. Proteolytic fragments of the N-terminal propeptide (termed CAP3, CAP5 and CAP6) are likely retained in the DISC. In addition to extrinsic apoptosis, also acts as a negative regulator of necroptosis: acts by cleaving RIPK1 at 'Asp-324', which is crucial to inhibit RIPK1 kinase activity, limiting TNF-induced apoptosis, necroptosis and inflammatory response. Also able to initiate pyroptosis by mediating cleavage and activation of gasdermin-C and -D (GSDMC and GSDMD, respectively): gasdermin cleavage promotes release of the N-terminal moiety that binds to membranes and forms pores, triggering pyroptosis. Initiates pyroptosis following inactivation of MAP3K7/TAK1. Also acts as a regulator of innate immunity by mediating cleavage and inactivation of N4BP1 downstream of TLR3 or TLR4, thereby promoting cytokine production. May participate in the Granzyme B (GZMB) cell death pathways. Cleaves PARP1 and PARP2. Independent of its protease activity, promotes cell migration following phosphorylation at Tyr-380. In terms of biological role, lacks the catalytic site and may interfere with the pro-apoptotic activity of the complex. Its function is as follows. Lacks the catalytic site and may interfere with the pro-apoptotic activity of the complex. Acts as an inhibitor of the caspase cascade. This is Caspase-8 from Homo sapiens (Human).